Consider the following 581-residue polypeptide: Neither inactivation nor afterpotential protein G (581 aa).

A signal peptide spans 1–26 (MGMKFQKILVLAGIVIGFLSIIVVLA). 48 to 77 (DYVIVGGGTGGSTLTSLLAKNSNGSVLLIE) is a binding site for FAD. N-linked (GlcNAc...) asparagine glycosylation is found at N70, N156, N404, and N464. The Proton acceptor role is filled by H516.

Belongs to the GMC oxidoreductase family. The cofactor is FAD.

It is found in the secreted. Functionally, oxidoreductase involved in biosynthesis of 3-hydroxyretinal, a chromophore for rhodopsin Rh1. Not responsible for the initial hydroxylation of the retinal ring but rather acts in a subsequent step in chromophore production. May catalyze the conversion of (3R)-3-hydroxyretinol to the 3S enantiomer. The polypeptide is Neither inactivation nor afterpotential protein G (ninaG) (Drosophila melanogaster (Fruit fly)).